The chain runs to 631 residues: Phosphomethylpyrimidine synthase (631 aa).

Substrate contacts are provided by residues Asn-239, Met-268, Tyr-297, His-333, 353–355 (SRG), 394–397 (DGLR), and Glu-433. His-437 serves as a coordination point for Zn(2+). Tyr-460 provides a ligand contact to substrate. Residue His-501 coordinates Zn(2+). [4Fe-4S] cluster contacts are provided by Cys-581, Cys-584, and Cys-589.

Belongs to the ThiC family. Homodimer. It depends on [4Fe-4S] cluster as a cofactor.

The enzyme catalyses 5-amino-1-(5-phospho-beta-D-ribosyl)imidazole + S-adenosyl-L-methionine = 4-amino-2-methyl-5-(phosphooxymethyl)pyrimidine + CO + 5'-deoxyadenosine + formate + L-methionine + 3 H(+). Its pathway is cofactor biosynthesis; thiamine diphosphate biosynthesis. Catalyzes the synthesis of the hydroxymethylpyrimidine phosphate (HMP-P) moiety of thiamine from aminoimidazole ribotide (AIR) in a radical S-adenosyl-L-methionine (SAM)-dependent reaction. This chain is Phosphomethylpyrimidine synthase, found in Escherichia coli O81 (strain ED1a).